A 370-amino-acid polypeptide reads, in one-letter code: Lipoyl synthase, mitochondrial (370 aa).

Cys104, Cys109, Cys115, Cys135, Cys139, Cys142, and Ser350 together coordinate [4Fe-4S] cluster. The 222-residue stretch at 118 to 339 (GGDKSKATAT…KQKALELGFL (222 aa)) folds into the Radical SAM core domain.

Belongs to the radical SAM superfamily. Lipoyl synthase family. It depends on [4Fe-4S] cluster as a cofactor.

The protein resides in the mitochondrion. It carries out the reaction [[Fe-S] cluster scaffold protein carrying a second [4Fe-4S](2+) cluster] + N(6)-octanoyl-L-lysyl-[protein] + 2 oxidized [2Fe-2S]-[ferredoxin] + 2 S-adenosyl-L-methionine + 4 H(+) = [[Fe-S] cluster scaffold protein] + N(6)-[(R)-dihydrolipoyl]-L-lysyl-[protein] + 4 Fe(3+) + 2 hydrogen sulfide + 2 5'-deoxyadenosine + 2 L-methionine + 2 reduced [2Fe-2S]-[ferredoxin]. Its pathway is protein modification; protein lipoylation via endogenous pathway; protein N(6)-(lipoyl)lysine from octanoyl-[acyl-carrier-protein]: step 2/2. Its function is as follows. Catalyzes the radical-mediated insertion of two sulfur atoms into the C-6 and C-8 positions of the octanoyl moiety bound to the lipoyl domains of lipoate-dependent enzymes, thereby converting the octanoylated domains into lipoylated derivatives. In Kluyveromyces lactis (strain ATCC 8585 / CBS 2359 / DSM 70799 / NBRC 1267 / NRRL Y-1140 / WM37) (Yeast), this protein is Lipoyl synthase, mitochondrial.